The sequence spans 89 residues: Large ribosomal subunit protein bL27 (89 aa).

Residues 1–23 form a disordered region; the sequence is MAHKKAGGSSRNGRDSAGKRLGI.

It belongs to the bacterial ribosomal protein bL27 family.

This chain is Large ribosomal subunit protein bL27, found in Rhodopseudomonas palustris (strain BisA53).